The primary structure comprises 141 residues: Mu-like prophage FluMu protein gp36 (141 aa).

This sequence to phage Mu protein gp36.

The protein is Mu-like prophage FluMu protein gp36 of Haemophilus influenzae (strain ATCC 51907 / DSM 11121 / KW20 / Rd).